We begin with the raw amino-acid sequence, 92 residues long: Small ribosomal subunit protein bS20 (92 aa).

A disordered region spans residues 1–23; it reads MANSPSAKKRAIQAEKRRSHNAS.

It belongs to the bacterial ribosomal protein bS20 family.

Binds directly to 16S ribosomal RNA. This Stutzerimonas stutzeri (strain A1501) (Pseudomonas stutzeri) protein is Small ribosomal subunit protein bS20.